Reading from the N-terminus, the 419-residue chain is UDP-N-acetylglucosamine 1-carboxyvinyltransferase (419 aa).

22 to 23 contacts phosphoenolpyruvate; sequence KN. R93 contacts UDP-N-acetyl-alpha-D-glucosamine. C117 (proton donor) is an active-site residue. C117 is modified (2-(S-cysteinyl)pyruvic acid O-phosphothioketal). D307 and I329 together coordinate UDP-N-acetyl-alpha-D-glucosamine.

It belongs to the EPSP synthase family. MurA subfamily.

Its subcellular location is the cytoplasm. It catalyses the reaction phosphoenolpyruvate + UDP-N-acetyl-alpha-D-glucosamine = UDP-N-acetyl-3-O-(1-carboxyvinyl)-alpha-D-glucosamine + phosphate. Its pathway is cell wall biogenesis; peptidoglycan biosynthesis. Its function is as follows. Cell wall formation. Adds enolpyruvyl to UDP-N-acetylglucosamine. The sequence is that of UDP-N-acetylglucosamine 1-carboxyvinyltransferase from Shewanella piezotolerans (strain WP3 / JCM 13877).